A 50-amino-acid polypeptide reads, in one-letter code: U2-ctenitoxin-Pk1a (50 aa).

Cystine bridges form between C1–C15, C8–C21, C12–C47, C14–C31, and C23–C29.

As to expression, expressed by the venom gland.

It is found in the secreted. In terms of biological role, insecticidal neurotoxin that reversibly inhibits the N-methyl-D-aspartate (NMDA)-subtype of ionotropic glutamate receptor (GRIN) and inhibits inactivation of insect sodium channels (Nav). In vivo, is highly toxic to insects. The polypeptide is U2-ctenitoxin-Pk1a (Phoneutria keyserlingi (Brazilian wandering spider)).